We begin with the raw amino-acid sequence, 438 residues long: Probable phosphoglucosamine mutase (438 aa).

Residue Ser91 is the Phosphoserine intermediate of the active site. Ser91, Asp228, Asp230, and Asp232 together coordinate Mg(2+). Ser91 carries the phosphoserine modification.

This sequence belongs to the phosphohexose mutase family. Requires Mg(2+) as cofactor. Post-translationally, activated by phosphorylation.

The enzyme catalyses alpha-D-glucosamine 1-phosphate = D-glucosamine 6-phosphate. Its function is as follows. Catalyzes the conversion of glucosamine-6-phosphate to glucosamine-1-phosphate. This is Probable phosphoglucosamine mutase from Methanocella arvoryzae (strain DSM 22066 / NBRC 105507 / MRE50).